Here is an 83-residue protein sequence, read N- to C-terminus: Molybdopterin synthase sulfur carrier subunit (83 aa).

The residue at position 83 (Gly83) is a 1-thioglycine; alternate. The residue at position 83 (Gly83) is a Glycyl adenylate; alternate.

It belongs to the MoaD family. MOCS2A subfamily. In terms of assembly, heterotetramer; composed of 2 small (MOCS2A) and 2 large (MOCS2B) subunits. In terms of processing, C-terminal thiocarboxylation occurs in 2 steps, it is first acyl-adenylated (-COAMP) via the hesA/moeB/thiF part of MOCS3, then thiocarboxylated (-COSH) via the rhodanese domain of MOCS3.

The protein localises to the cytoplasm. Its pathway is cofactor biosynthesis; molybdopterin biosynthesis. Acts as a sulfur carrier required for molybdopterin biosynthesis. Component of the molybdopterin synthase complex that catalyzes the conversion of precursor Z into molybdopterin by mediating the incorporation of 2 sulfur atoms into precursor Z to generate a dithiolene group. In the complex, serves as sulfur donor by being thiocarboxylated (-COSH) at its C-terminus by MOCS3. After interaction with MOCS2B, the sulfur is then transferred to precursor Z to form molybdopterin. The polypeptide is Molybdopterin synthase sulfur carrier subunit (Chlamydomonas reinhardtii (Chlamydomonas smithii)).